The following is a 511-amino-acid chain: Bifunctional purine biosynthesis protein PurH (511 aa).

The 145-residue stretch at 1–145 (MKKRALVSVS…KNHKFVSVIV (145 aa)) folds into the MGS-like domain.

It belongs to the PurH family.

It carries out the reaction (6R)-10-formyltetrahydrofolate + 5-amino-1-(5-phospho-beta-D-ribosyl)imidazole-4-carboxamide = 5-formamido-1-(5-phospho-D-ribosyl)imidazole-4-carboxamide + (6S)-5,6,7,8-tetrahydrofolate. It catalyses the reaction IMP + H2O = 5-formamido-1-(5-phospho-D-ribosyl)imidazole-4-carboxamide. Its pathway is purine metabolism; IMP biosynthesis via de novo pathway; 5-formamido-1-(5-phospho-D-ribosyl)imidazole-4-carboxamide from 5-amino-1-(5-phospho-D-ribosyl)imidazole-4-carboxamide (10-formyl THF route): step 1/1. The protein operates within purine metabolism; IMP biosynthesis via de novo pathway; IMP from 5-formamido-1-(5-phospho-D-ribosyl)imidazole-4-carboxamide: step 1/1. This is Bifunctional purine biosynthesis protein PurH from Bacillus cereus (strain B4264).